The primary structure comprises 1455 residues: Fanconi anemia group A protein (1455 aa).

The short motif at 18-34 is the Nuclear localization signal element; the sequence is RRRAWAELLAGRVKREK. S1449 carries the post-translational modification Phosphoserine.

In terms of assembly, belongs to the multisubunit FA complex composed of FANCA, FANCB, FANCC, FANCE, FANCF, FANCG, FANCL/PHF9 and FANCM. The complex is not found in FA patients. In complex with FANCF, FANCG and FANCL, but not with FANCC, nor FANCE, interacts with HES1; this interaction may be essential for the stability and nuclear localization of FA core complex proteins. The complex with FANCC and FANCG may also include EIF2AK2 and HSP70. Interacts with FAAP20/C1orf86; interaction is direct. Post-translationally, phosphorylation is required for the formation of the nuclear complex. Not phosphorylated in cells derived from groups A, B, C, E, F, G, and H.

The protein localises to the nucleus. Its subcellular location is the cytoplasm. Functionally, DNA repair protein that may operate in a postreplication repair or a cell cycle checkpoint function. May be involved in interstrand DNA cross-link repair and in the maintenance of normal chromosome stability. The sequence is that of Fanconi anemia group A protein (FANCA) from Homo sapiens (Human).